The primary structure comprises 1435 residues: Gag-Pol polyprotein (1435 aa).

A lipid anchor (N-myristoyl glycine; by host) is attached at G2. Positions 7 to 31 are interaction with Gp41; that stretch reads VLSGGKLDKWEKIRLRPGGKKKYRL. Positions 8–43 are interaction with host CALM1; it reads LSGGKLDKWEKIRLRPGGKKKYRLKHIVWASRELER. Positions 12–19 are interaction with host AP3D1; that stretch reads KLDKWEKI. The segment at 14 to 33 is interaction with membrane phosphatidylinositol 4,5-bisphosphate and RNA; sequence DKWEKIRLRPGGKKKYRLKH. Residues 16–22 carry the Nuclear export signal motif; the sequence is WEKIRLR. Residues 26–32 carry the Nuclear localization signal motif; the sequence is KKKYRLK. Residues 73–77 are interaction with membrane phosphatidylinositol 4,5-bisphosphate; sequence EELRS. The tract at residues 102–128 is disordered; sequence EKMEEEQNKSKKKAQQAAADTGNNSQV. Phosphotyrosine; by host is present on Y132. The interval 189–227 is interaction with human PPIA/CYPA and NUP153; sequence NTVGGHQAAMQMLKETINEEAAEWDRLHPVHAGPIAPGQ. Positions 277–363 are dimerization/Multimerization of capsid protein p24; it reads YSPVSILDIR…GGPSHKARVL (87 aa). 2 CCHC-type zinc fingers span residues 391 to 408 and 412 to 429; these read IKCFNCGKEGHIAKNCRA and KGCWRCGKEGHQLKDCTE. The interval 489-493 is dimerization of protease; the sequence is PQITL. In terms of domain architecture, Peptidase A2 spans 508 to 577; sequence KEALLDTGAD…TPVNIIGRNL (70 aa). D513 (for protease activity; shared with dimeric partner) is an active-site residue. Dimerization of protease stretches follow at residues 537–543 and 576–588; these read GIGGFIK and NLLTQIGCTLNFP. One can recognise a Reverse transcriptase domain in the interval 631–821; it reads EGKISRIGPE…PPFLWMGYEL (191 aa). D697, D772, and D773 together coordinate Mg(2+). The tract at residues 814-822 is RT 'primer grip'; that stretch reads FLWMGYELH. Positions 985 to 1001 match the Tryptophan repeat motif motif; that stretch reads WETWWAEYWQATWIPEW. Positions 1021–1144 constitute an RNase H type-1 domain; that stretch reads IIGAETFYVD…VDKLVSQGIR (124 aa). Positions 1030, 1065, 1085, and 1136 each coordinate Mg(2+). The Integrase-type zinc-finger motif lies at 1150–1191; sequence DGIDKAQEEHEKYHNNWRAMASDFNLPPVVAKEIVASCDKCQ. Zn(2+) contacts are provided by H1159, H1163, C1187, and C1190. Positions 1201-1351 constitute an Integrase catalytic domain; that stretch reads VDCSPGIWQL…SAGERIIDII (151 aa). Mg(2+) is bound by residues D1211, D1263, and E1299. Positions 1370–1417 form a DNA-binding region, integrase-type; it reads FRVYYRDSRDPIWKGPAKLLWKGEGAVVIQDKSDIKVVPRRKVKIIRD.

In terms of assembly, homotrimer; further assembles as hexamers of trimers. Interacts with gp41 (via C-terminus). Interacts with host CALM1; this interaction induces a conformational change in the Matrix protein, triggering exposure of the myristate group. Interacts with host AP3D1; this interaction allows the polyprotein trafficking to multivesicular bodies during virus assembly. Part of the pre-integration complex (PIC) which is composed of viral genome, matrix protein, Vpr and integrase. As to quaternary structure, homodimer; the homodimer further multimerizes as homohexamers or homopentamers. Interacts with human PPIA/CYPA; This interaction stabilizes the capsid. Interacts with human NUP153. Interacts with host PDZD8; this interaction stabilizes the capsid. Interacts with monkey TRIM5; this interaction destabilizes the capsid. Homodimer, whose active site consists of two apposed aspartic acid residues. In terms of assembly, heterodimer of p66 RT and p51 RT (RT p66/p51). Heterodimerization of RT is essential for DNA polymerase activity. The overall folding of the subdomains is similar in p66 RT and p51 RT but the spatial arrangements of the subdomains are dramatically different. As to quaternary structure, homotetramer; may further associate as a homohexadecamer. Part of the pre-integration complex (PIC) which is composed of viral genome, matrix protein, Vpr and integrase. Interacts with human SMARCB1/INI1 and human PSIP1/LEDGF isoform 1. Interacts with human KPNA3; this interaction might play a role in nuclear import of the pre-integration complex. Interacts with human NUP153; this interaction might play a role in nuclear import of the pre-integration complex. Requires Mg(2+) as cofactor. Specific enzymatic cleavages by the viral protease yield mature proteins. The protease is released by autocatalytic cleavage. The polyprotein is cleaved during and after budding, this process is termed maturation. Proteolytic cleavage of p66 RT removes the RNase H domain to yield the p51 RT subunit. Nucleocapsid protein p7 might be further cleaved after virus entry. In terms of processing, tyrosine phosphorylated presumably in the virion by a host kinase. Phosphorylation is apparently not a major regulator of membrane association. Post-translationally, phosphorylated possibly by host MAPK1; this phosphorylation is necessary for Pin1-mediated virion uncoating. Methylated by host PRMT6, impairing its function by reducing RNA annealing and the initiation of reverse transcription.

The protein resides in the host cell membrane. Its subcellular location is the host endosome. The protein localises to the host multivesicular body. It localises to the virion membrane. It is found in the host nucleus. The protein resides in the host cytoplasm. Its subcellular location is the virion. It carries out the reaction Specific for a P1 residue that is hydrophobic, and P1' variable, but often Pro.. The enzyme catalyses Endohydrolysis of RNA in RNA/DNA hybrids. Three different cleavage modes: 1. sequence-specific internal cleavage of RNA. Human immunodeficiency virus type 1 and Moloney murine leukemia virus enzymes prefer to cleave the RNA strand one nucleotide away from the RNA-DNA junction. 2. RNA 5'-end directed cleavage 13-19 nucleotides from the RNA end. 3. DNA 3'-end directed cleavage 15-20 nucleotides away from the primer terminus.. It catalyses the reaction 3'-end directed exonucleolytic cleavage of viral RNA-DNA hybrid.. The catalysed reaction is DNA(n) + a 2'-deoxyribonucleoside 5'-triphosphate = DNA(n+1) + diphosphate. Its activity is regulated as follows. Protease: The viral protease is inhibited by many synthetic protease inhibitors (PIs), such as amprenavir, atazanavir, indinavir, loprinavir, nelfinavir, ritonavir and saquinavir. Use of protease inhibitors in tritherapy regimens permit more ambitious therapeutic strategies. Reverse transcriptase/ribonuclease H: RT can be inhibited either by nucleoside RT inhibitors (NRTIs) or by non nucleoside RT inhibitors (NNRTIs). NRTIs act as chain terminators, whereas NNRTIs inhibit DNA polymerization by binding a small hydrophobic pocket near the RT active site and inducing an allosteric change in this region. Classical NRTIs are abacavir, adefovir (PMEA), didanosine (ddI), lamivudine (3TC), stavudine (d4T), tenofovir (PMPA), zalcitabine (ddC), and zidovudine (AZT). Classical NNRTIs are atevirdine (BHAP U-87201E), delavirdine, efavirenz (DMP-266), emivirine (I-EBU), and nevirapine (BI-RG-587). The tritherapies used as a basic effective treatment of AIDS associate two NRTIs and one NNRTI. Its function is as follows. Mediates, with Gag polyprotein, the essential events in virion assembly, including binding the plasma membrane, making the protein-protein interactions necessary to create spherical particles, recruiting the viral Env proteins, and packaging the genomic RNA via direct interactions with the RNA packaging sequence (Psi). Gag-Pol polyprotein may regulate its own translation, by the binding genomic RNA in the 5'-UTR. At low concentration, the polyprotein would promote translation, whereas at high concentration, the polyprotein would encapsidate genomic RNA and then shut off translation. Functionally, targets the polyprotein to the plasma membrane via a multipartite membrane-binding signal, that includes its myristoylated N-terminus. Matrix protein is part of the pre-integration complex. Implicated in the release from host cell mediated by Vpu. Binds to RNA. In terms of biological role, forms the conical core that encapsulates the genomic RNA-nucleocapsid complex in the virion. Most core are conical, with only 7% tubular. The core is constituted by capsid protein hexamer subunits. The core is disassembled soon after virion entry. Host restriction factors such as TRIM5-alpha or TRIMCyp bind retroviral capsids and cause premature capsid disassembly, leading to blocks in reverse transcription. Capsid restriction by TRIM5 is one of the factors which restricts HIV-1 to the human species. Host PIN1 apparently facilitates the virion uncoating. On the other hand, interactions with PDZD8 or CYPA stabilize the capsid. Encapsulates and protects viral dimeric unspliced genomic RNA (gRNA). Binds these RNAs through its zinc fingers. Acts as a nucleic acid chaperone which is involved in rearangement of nucleic acid secondary structure during gRNA retrotranscription. Also facilitates template switch leading to recombination. As part of the polyprotein, participates in gRNA dimerization, packaging, tRNA incorporation and virion assembly. Its function is as follows. Aspartyl protease that mediates proteolytic cleavages of Gag and Gag-Pol polyproteins during or shortly after the release of the virion from the plasma membrane. Cleavages take place as an ordered, step-wise cascade to yield mature proteins. This process is called maturation. Displays maximal activity during the budding process just prior to particle release from the cell. Also cleaves Nef and Vif, probably concomitantly with viral structural proteins on maturation of virus particles. Hydrolyzes host EIF4GI and PABP1 in order to shut off the capped cellular mRNA translation. The resulting inhibition of cellular protein synthesis serves to ensure maximal viral gene expression and to evade host immune response. Also mediates cleavage of host YTHDF3. Mediates cleavage of host CARD8, thereby activating the CARD8 inflammasome, leading to the clearance of latent HIV-1 in patient CD4(+) T-cells after viral reactivation; in contrast, HIV-1 can evade CARD8-sensing when its protease remains inactive in infected cells prior to viral budding. Functionally, multifunctional enzyme that converts the viral RNA genome into dsDNA in the cytoplasm, shortly after virus entry into the cell. This enzyme displays a DNA polymerase activity that can copy either DNA or RNA templates, and a ribonuclease H (RNase H) activity that cleaves the RNA strand of RNA-DNA heteroduplexes in a partially processive 3' to 5' endonucleasic mode. Conversion of viral genomic RNA into dsDNA requires many steps. A tRNA(3)-Lys binds to the primer-binding site (PBS) situated at the 5'-end of the viral RNA. RT uses the 3' end of the tRNA primer to perform a short round of RNA-dependent minus-strand DNA synthesis. The reading proceeds through the U5 region and ends after the repeated (R) region which is present at both ends of viral RNA. The portion of the RNA-DNA heteroduplex is digested by the RNase H, resulting in a ssDNA product attached to the tRNA primer. This ssDNA/tRNA hybridizes with the identical R region situated at the 3' end of viral RNA. This template exchange, known as minus-strand DNA strong stop transfer, can be either intra- or intermolecular. RT uses the 3' end of this newly synthesized short ssDNA to perform the RNA-dependent minus-strand DNA synthesis of the whole template. RNase H digests the RNA template except for two polypurine tracts (PPTs) situated at the 5'-end and near the center of the genome. It is not clear if both polymerase and RNase H activities are simultaneous. RNase H probably can proceed both in a polymerase-dependent (RNA cut into small fragments by the same RT performing DNA synthesis) and a polymerase-independent mode (cleavage of remaining RNA fragments by free RTs). Secondly, RT performs DNA-directed plus-strand DNA synthesis using the PPTs that have not been removed by RNase H as primers. PPTs and tRNA primers are then removed by RNase H. The 3' and 5' ssDNA PBS regions hybridize to form a circular dsDNA intermediate. Strand displacement synthesis by RT to the PBS and PPT ends produces a blunt ended, linear dsDNA copy of the viral genome that includes long terminal repeats (LTRs) at both ends. In terms of biological role, catalyzes viral DNA integration into the host chromosome, by performing a series of DNA cutting and joining reactions. This enzyme activity takes place after virion entry into a cell and reverse transcription of the RNA genome in dsDNA. The first step in the integration process is 3' processing. This step requires a complex comprising the viral genome, matrix protein, Vpr and integrase. This complex is called the pre-integration complex (PIC). The integrase protein removes 2 nucleotides from each 3' end of the viral DNA, leaving recessed CA OH's at the 3' ends. In the second step, the PIC enters cell nucleus. This process is mediated through integrase and Vpr proteins, and allows the virus to infect a non dividing cell. This ability to enter the nucleus is specific of lentiviruses, other retroviruses cannot and rely on cell division to access cell chromosomes. In the third step, termed strand transfer, the integrase protein joins the previously processed 3' ends to the 5' ends of strands of target cellular DNA at the site of integration. The 5'-ends are produced by integrase-catalyzed staggered cuts, 5 bp apart. A Y-shaped, gapped, recombination intermediate results, with the 5'-ends of the viral DNA strands and the 3' ends of target DNA strands remaining unjoined, flanking a gap of 5 bp. The last step is viral DNA integration into host chromosome. This involves host DNA repair synthesis in which the 5 bp gaps between the unjoined strands are filled in and then ligated. Since this process occurs at both cuts flanking the HIV genome, a 5 bp duplication of host DNA is produced at the ends of HIV-1 integration. Alternatively, Integrase may catalyze the excision of viral DNA just after strand transfer, this is termed disintegration. This is Gag-Pol polyprotein (gag-pol) from Human immunodeficiency virus type 1 group M subtype D (isolate ELI) (HIV-1).